A 390-amino-acid chain; its full sequence is 4-hydroxy-3-methylbut-2-en-1-yl diphosphate synthase (flavodoxin) (390 aa).

Residues C281, C284, C316, and E323 each contribute to the [4Fe-4S] cluster site.

The protein belongs to the IspG family. Requires [4Fe-4S] cluster as cofactor.

It carries out the reaction (2E)-4-hydroxy-3-methylbut-2-enyl diphosphate + oxidized [flavodoxin] + H2O + 2 H(+) = 2-C-methyl-D-erythritol 2,4-cyclic diphosphate + reduced [flavodoxin]. It functions in the pathway isoprenoid biosynthesis; isopentenyl diphosphate biosynthesis via DXP pathway; isopentenyl diphosphate from 1-deoxy-D-xylulose 5-phosphate: step 5/6. In terms of biological role, converts 2C-methyl-D-erythritol 2,4-cyclodiphosphate (ME-2,4cPP) into 1-hydroxy-2-methyl-2-(E)-butenyl 4-diphosphate. The chain is 4-hydroxy-3-methylbut-2-en-1-yl diphosphate synthase (flavodoxin) from Salinispora tropica (strain ATCC BAA-916 / DSM 44818 / JCM 13857 / NBRC 105044 / CNB-440).